Consider the following 281-residue polypeptide: Sulfur carrier protein FdhD (281 aa).

The Cysteine persulfide intermediate role is filled by cysteine 117.

It belongs to the FdhD family.

It is found in the cytoplasm. Required for formate dehydrogenase (FDH) activity. Acts as a sulfur carrier protein that transfers sulfur from IscS to the molybdenum cofactor prior to its insertion into FDH. The chain is Sulfur carrier protein FdhD from Xanthomonas euvesicatoria pv. vesicatoria (strain 85-10) (Xanthomonas campestris pv. vesicatoria).